Consider the following 351-residue polypeptide: GTPase Obg (351 aa).

Residues 1–159 (MKFLDQCKIY…RWVWLRLKLI (159 aa)) form the Obg domain. The OBG-type G domain occupies 160 to 327 (ADAGLVGLPN…MLFELLRHIR (168 aa)). Residues 166 to 173 (GLPNAGKS), 191 to 195 (FTTLT), 212 to 215 (DIPG), 279 to 282 (NKID), and 308 to 310 (SGA) contribute to the GTP site. Positions 173 and 193 each coordinate Mg(2+).

It belongs to the TRAFAC class OBG-HflX-like GTPase superfamily. OBG GTPase family. In terms of assembly, monomer. Requires Mg(2+) as cofactor.

The protein localises to the cytoplasm. In terms of biological role, an essential GTPase which binds GTP, GDP and possibly (p)ppGpp with moderate affinity, with high nucleotide exchange rates and a fairly low GTP hydrolysis rate. Plays a role in control of the cell cycle, stress response, ribosome biogenesis and in those bacteria that undergo differentiation, in morphogenesis control. In Rhodospirillum centenum (strain ATCC 51521 / SW), this protein is GTPase Obg.